Reading from the N-terminus, the 380-residue chain is Queuine tRNA-ribosyltransferase (380 aa).

Catalysis depends on D96, which acts as the Proton acceptor. Substrate is bound by residues 96–100 (DSGGF), D150, Q193, and G220. The segment at 251–257 (GVGAPDS) is RNA binding. The active-site Nucleophile is D270. The tract at residues 275–279 (TRIAR) is RNA binding; important for wobble base 34 recognition. 4 residues coordinate Zn(2+): C308, C310, C313, and H339.

This sequence belongs to the queuine tRNA-ribosyltransferase family. In terms of assembly, homodimer. Within each dimer, one monomer is responsible for RNA recognition and catalysis, while the other monomer binds to the replacement base PreQ1. The cofactor is Zn(2+).

It catalyses the reaction 7-aminomethyl-7-carbaguanine + guanosine(34) in tRNA = 7-aminomethyl-7-carbaguanosine(34) in tRNA + guanine. Its pathway is tRNA modification; tRNA-queuosine biosynthesis. In terms of biological role, catalyzes the base-exchange of a guanine (G) residue with the queuine precursor 7-aminomethyl-7-deazaguanine (PreQ1) at position 34 (anticodon wobble position) in tRNAs with GU(N) anticodons (tRNA-Asp, -Asn, -His and -Tyr). Catalysis occurs through a double-displacement mechanism. The nucleophile active site attacks the C1' of nucleotide 34 to detach the guanine base from the RNA, forming a covalent enzyme-RNA intermediate. The proton acceptor active site deprotonates the incoming PreQ1, allowing a nucleophilic attack on the C1' of the ribose to form the product. After dissociation, two additional enzymatic reactions on the tRNA convert PreQ1 to queuine (Q), resulting in the hypermodified nucleoside queuosine (7-(((4,5-cis-dihydroxy-2-cyclopenten-1-yl)amino)methyl)-7-deazaguanosine). This is Queuine tRNA-ribosyltransferase from Streptococcus suis (strain 98HAH33).